The chain runs to 564 residues: Serine/threonine-protein kinase DBF20 (564 aa).

Ser-17 carries the post-translational modification Phosphoserine. The disordered stretch occupies residues 24–62 (LNIPKPTSPQAQYRPARKSENGRLTPGLPRSYKPCDSDD). The Protein kinase domain maps to 169–469 (FQILTQVGQG…FEQVRKMSYF (301 aa)). ATP contacts are provided by residues 175–183 (VGQGGYGQV) and Lys-198. Residue Asp-292 is the Proton acceptor of the active site. Phosphoserine is present on Ser-366. The 78-residue stretch at 470–547 (AEINFETLRT…RHRDGKQGSS (78 aa)) folds into the AGC-kinase C-terminal domain. Thr-536 bears the Phosphothreonine mark.

It belongs to the protein kinase superfamily. Ser/Thr protein kinase family.

It carries out the reaction L-seryl-[protein] + ATP = O-phospho-L-seryl-[protein] + ADP + H(+). It catalyses the reaction L-threonyl-[protein] + ATP = O-phospho-L-threonyl-[protein] + ADP + H(+). In terms of biological role, is probably a Ser/Thr-protein kinase that may function in initiation of DNA synthesis and also in late nuclear division. In Saccharomyces cerevisiae (strain ATCC 204508 / S288c) (Baker's yeast), this protein is Serine/threonine-protein kinase DBF20 (DBF20).